A 446-amino-acid polypeptide reads, in one-letter code: tRNA-2-methylthio-N(6)-dimethylallyladenosine synthase (446 aa).

Positions 3 to 124 (KKLYIKTYGC…LPELISKVVR (122 aa)) constitute an MTTase N-terminal domain. Cysteine 12, cysteine 48, cysteine 87, cysteine 162, cysteine 166, and cysteine 169 together coordinate [4Fe-4S] cluster. The region spanning 148–380 (YPQGASSFIS…QKELAAQQLA (233 aa)) is the Radical SAM core domain. The TRAM domain maps to 383-446 (ESCIGSTMKV…LNSLSGEIYR (64 aa)).

Belongs to the methylthiotransferase family. MiaB subfamily. As to quaternary structure, monomer. It depends on [4Fe-4S] cluster as a cofactor.

The protein resides in the cytoplasm. The catalysed reaction is N(6)-dimethylallyladenosine(37) in tRNA + (sulfur carrier)-SH + AH2 + 2 S-adenosyl-L-methionine = 2-methylsulfanyl-N(6)-dimethylallyladenosine(37) in tRNA + (sulfur carrier)-H + 5'-deoxyadenosine + L-methionine + A + S-adenosyl-L-homocysteine + 2 H(+). Functionally, catalyzes the methylthiolation of N6-(dimethylallyl)adenosine (i(6)A), leading to the formation of 2-methylthio-N6-(dimethylallyl)adenosine (ms(2)i(6)A) at position 37 in tRNAs that read codons beginning with uridine. The polypeptide is tRNA-2-methylthio-N(6)-dimethylallyladenosine synthase (Rickettsia bellii (strain OSU 85-389)).